A 357-amino-acid polypeptide reads, in one-letter code: MSYDEMLSAAKKAVSLAARLSNEVRKSLLVTDVWNKSDDSPVTVADYGSQAVVSLVLERELQNEPVSLVAEEDSGELRKIAAETVLARITELVKDTLASDESYAIASPLTSDDVLNAIDRGKSEGGPKGRHWILDPIGGTRGFIRGEQYAIGLALLVEGKVVLGVMACPKLPLASTAGNALKSLPEKVGCLFYGSVGNGTYVQSLSVDSLPAKVEVSSIDDPAKASFFESYHTPVPIHNTIATKLGIKESPIKINSQTKYAALSRGDGEVYLRFTRKARPESIWNHAAGSIIVSEAGGKVTDAAGNPLDFSKGKYLDYKRGIVVTTQKLLPRLLTAVRESIKEEEEEEEKAASLKLH.

Residue Asp-46 is the Proton acceptor of the active site. Mg(2+) is bound by residues Glu-71, Asp-135, and Ile-137. Thr-140 functions as the Proton acceptor in the catalytic mechanism. Thr-140, Ser-256, Lys-259, and Arg-273 together coordinate adenosine 3',5'-bisphosphate. Residues Ser-256, Lys-259, and Arg-273 each contribute to the AMP site.

The protein belongs to the inositol monophosphatase superfamily. It depends on Mg(2+) as a cofactor.

The enzyme catalyses 3'-phosphoadenylyl sulfate + H2O = adenosine 5'-phosphosulfate + phosphate. The catalysed reaction is adenosine 3',5'-bisphosphate + H2O = AMP + phosphate. It catalyses the reaction adenosine 2',5'-bisphosphate + H2O = AMP + phosphate. It carries out the reaction 1D-myo-inositol 1,4-bisphosphate + H2O = 1D-myo-inositol 4-phosphate + phosphate. The enzyme catalyses 1D-myo-inositol 1,3,4-trisphosphate + H2O = 1D-myo-inositol 3,4-bisphosphate + phosphate. Its pathway is signal transduction; phosphatidylinositol signaling pathway. Its function is as follows. Phosphatase that converts adenosine 3'-phosphate 5'-phosphosulfate (PAPS) to adenosine 5'-phosphosulfate (APS) and 3'(2')-phosphoadenosine 5'-phosphate (PAP) to AMP. Is also able to hydrolyze inositol 1,4-bisphosphate and inositol 1,3,4-trisphosphate. This Arabidopsis thaliana (Mouse-ear cress) protein is Probable 3'(2'),5'-bisphosphate nucleotidase 3 (SAL3).